The primary structure comprises 254 residues: Phosphate import ATP-binding protein PstB 2 (254 aa).

The region spanning 9–249 is the ABC transporter domain; that stretch reads FNIDNLNLFY…PRDDRTRGYV (241 aa). ATP is bound at residue 41 to 48; sequence GPSGCGKS.

The protein belongs to the ABC transporter superfamily. Phosphate importer (TC 3.A.1.7) family. The complex is composed of two ATP-binding proteins (PstB), two transmembrane proteins (PstC and PstA) and a solute-binding protein (PstS).

It localises to the cell inner membrane. It carries out the reaction phosphate(out) + ATP + H2O = ADP + 2 phosphate(in) + H(+). Its function is as follows. Part of the ABC transporter complex PstSACB involved in phosphate import. Responsible for energy coupling to the transport system. This is Phosphate import ATP-binding protein PstB 2 from Photobacterium profundum (strain SS9).